Reading from the N-terminus, the 287-residue chain is Nucleoside kinase (287 aa).

4 residues coordinate substrate: Asp13, Asn28, Gly38, and Asn42. Gln102 lines the ATP pocket. Substrate-binding residues include Ser104 and Gln150. Residues Asn173 and 196-201 each bind ATP; that span reads TNGERG. Residue Asp227 coordinates substrate. Residue Asp227 is the Proton acceptor of the active site.

The protein belongs to the carbohydrate kinase PfkB family. In terms of assembly, homodimer. Mg(2+) is required as a cofactor. Co(2+) serves as cofactor.

The catalysed reaction is adenosine + ATP = AMP + ADP + H(+). The enzyme catalyses cytidine + ATP = CMP + ADP + H(+). It carries out the reaction guanosine + ATP = GMP + ADP + H(+). It catalyses the reaction inosine + ATP = IMP + ADP + H(+). In terms of biological role, nucleoside kinase with broad substrate specificity. Catalyzes the phosphorylation of a variety of nucleosides to the corresponding nucleoside 5'-mono-phosphate in the presence of phosphate donors and divalent cations. Displays the most efficient activity with guanosine, followed by inosine, cytidine, and adenosine. Negligible enzymatic activity is detected with thymidine, uridine, and 2-deoxyadenosine. ATP is the most efficient phosphate donor, but can also use GTP and ITP. Shows no sugar kinase activity, since it is unable to phosphorylate ribose, fructose-1-phosphate, or fructose-6-phosphate. The protein is Nucleoside kinase of Thermoplasma acidophilum (strain ATCC 25905 / DSM 1728 / JCM 9062 / NBRC 15155 / AMRC-C165).